The primary structure comprises 193 residues: Xanthine phosphoribosyltransferase (193 aa).

2 residues coordinate xanthine: L20 and N27. 129–133 (ANGKA) provides a ligand contact to 5-phospho-alpha-D-ribose 1-diphosphate. Residue K157 participates in xanthine binding.

This sequence belongs to the purine/pyrimidine phosphoribosyltransferase family. Xpt subfamily. As to quaternary structure, homodimer.

The protein localises to the cytoplasm. It carries out the reaction XMP + diphosphate = xanthine + 5-phospho-alpha-D-ribose 1-diphosphate. It participates in purine metabolism; XMP biosynthesis via salvage pathway; XMP from xanthine: step 1/1. Its function is as follows. Converts the preformed base xanthine, a product of nucleic acid breakdown, to xanthosine 5'-monophosphate (XMP), so it can be reused for RNA or DNA synthesis. In Bifidobacterium adolescentis (strain ATCC 15703 / DSM 20083 / NCTC 11814 / E194a), this protein is Xanthine phosphoribosyltransferase.